The sequence spans 60 residues: Putative mercuric resistance protein (60 aa).

In Pseudomonas aeruginosa, this protein is Putative mercuric resistance protein.